Here is an 85-residue protein sequence, read N- to C-terminus: Large ribosomal subunit protein bL27 (85 aa).

Positions 1-22 are disordered; it reads MAHKKAGGSTRNGRDSEAKRMG.

This sequence belongs to the bacterial ribosomal protein bL27 family.

This chain is Large ribosomal subunit protein bL27, found in Escherichia coli O6:K15:H31 (strain 536 / UPEC).